The primary structure comprises 886 residues: UPF0592 membrane protein C7D4.03c (886 aa).

The tract at residues 87–112 (ILNEPYNESPSSSSSDSSSRSTSPFS) is disordered. A compositionally biased stretch (low complexity) spans 95-112 (SPSSSSSDSSSRSTSPFS). Helical transmembrane passes span 277–297 (FCASILVLSFFQLPLFADHFL), 374–394 (GGFFFEFLSCYHSFLALQFSF), and 400–420 (VIYFAPGYICLHAYLLELTIS).

Belongs to the UPF0592 family.

Its subcellular location is the membrane. This Schizosaccharomyces pombe (strain 972 / ATCC 24843) (Fission yeast) protein is UPF0592 membrane protein C7D4.03c.